We begin with the raw amino-acid sequence, 375 residues long: Aminomethyltransferase (375 aa).

Belongs to the GcvT family. As to quaternary structure, the glycine cleavage system is composed of four proteins: P, T, L and H.

The enzyme catalyses N(6)-[(R)-S(8)-aminomethyldihydrolipoyl]-L-lysyl-[protein] + (6S)-5,6,7,8-tetrahydrofolate = N(6)-[(R)-dihydrolipoyl]-L-lysyl-[protein] + (6R)-5,10-methylene-5,6,7,8-tetrahydrofolate + NH4(+). The glycine cleavage system catalyzes the degradation of glycine. This Symbiobacterium thermophilum (strain DSM 24528 / JCM 14929 / IAM 14863 / T) protein is Aminomethyltransferase.